The sequence spans 549 residues: MSPTISHKDSSRQRRPGNFSHSLDMKSGPLPPGGWDDSHLDSAGREGDREALLGDTGTGDFLKAPQSFRAELSSILLLLFLYVLQGIPLGLAGSIPLILQSKNVSYTDQAFFSFVFWPFSLKLLWAPLVDAVYVKNFGRRKSWLVPTQYILGLFMIYLSTQVDRLLGNTDDRTPDVIALTVAFFLFEFLAATQDIAVDGWALTMLSRENVGYASTCNSVGQTAGYFLGNVLFLALESADFCNKYLRFQPQPRGIVTLSDFLFFWGTVFLITTTLVALLKKENEVSVVKEETQGITDTYKLLFAIIKMPAVLTFCLLILTAKIGFSAADAVTGLKLVEEGVPKEHLALLAVPMVPLQIILPLIISKYTAGPQPLNTFYKAMPYRLLLGLEYALLVWWTPKVEHQGGFPIYYYIVVLLSYALHQVTVYSMYVSIMAFNAKVSDPLIGGTYMTLLNTVSNLGGNWPSTVALWLVDPLTVKECVGASNQNCRTPDAVELCKKLGGSCVTALDGYYVESIICVFIGFGWWFFLGPKFKKLQDEGSSSWKCKRNN.

Residues 1 to 12 are compositionally biased toward basic and acidic residues; sequence MSPTISHKDSSR. The disordered stretch occupies residues 1 to 46; it reads MSPTISHKDSSRQRRPGNFSHSLDMKSGPLPPGGWDDSHLDSAGRE. The Cytoplasmic portion of the chain corresponds to 1–74; it reads MSPTISHKDS…PQSFRAELSS (74 aa). A phosphoserine mark is found at S22 and S42. The span at 36–46 shows a compositional bias: basic and acidic residues; the sequence is DDSHLDSAGRE. A helical membrane pass occupies residues 75 to 95; sequence ILLLLFLYVLQGIPLGLAGSI. At 96 to 113 the chain is on the extracellular side; the sequence is PLILQSKNVSYTDQAFFS. The N-linked (GlcNAc...) asparagine glycan is linked to N103. A helical transmembrane segment spans residues 114–134; it reads FVFWPFSLKLLWAPLVDAVYV. Residues 135-141 are Cytoplasmic-facing; sequence KNFGRRK. A helical transmembrane segment spans residues 142-162; the sequence is SWLVPTQYILGLFMIYLSTQV. Over 163-175 the chain is Extracellular; the sequence is DRLLGNTDDRTPD. Residues 176–196 traverse the membrane as a helical segment; it reads VIALTVAFFLFEFLAATQDIA. The Cytoplasmic segment spans residues 197 to 217; that stretch reads VDGWALTMLSRENVGYASTCN. Residues 218-238 traverse the membrane as a helical segment; it reads SVGQTAGYFLGNVLFLALESA. Residues 239 to 256 lie on the Extracellular side of the membrane; the sequence is DFCNKYLRFQPQPRGIVT. Residues 257-277 form a helical membrane-spanning segment; that stretch reads LSDFLFFWGTVFLITTTLVAL. At 278–299 the chain is on the cytoplasmic side; the sequence is LKKENEVSVVKEETQGITDTYK. Residues 300–320 traverse the membrane as a helical segment; sequence LLFAIIKMPAVLTFCLLILTA. The Extracellular portion of the chain corresponds to 321 to 343; the sequence is KIGFSAADAVTGLKLVEEGVPKE. A helical membrane pass occupies residues 344 to 364; that stretch reads HLALLAVPMVPLQIILPLIIS. Residues 365–378 lie on the Cytoplasmic side of the membrane; that stretch reads KYTAGPQPLNTFYK. Residues 379 to 398 form a helical membrane-spanning segment; the sequence is AMPYRLLLGLEYALLVWWTP. At 399–404 the chain is on the extracellular side; it reads KVEHQG. A helical membrane pass occupies residues 405 to 425; the sequence is GFPIYYYIVVLLSYALHQVTV. The Cytoplasmic portion of the chain corresponds to 426–508; that stretch reads YSMYVSIMAF…LGGSCVTALD (83 aa). A helical membrane pass occupies residues 509-529; that stretch reads GYYVESIICVFIGFGWWFFLG. At 530–549 the chain is on the extracellular side; the sequence is PKFKKLQDEGSSSWKCKRNN.

Belongs to the SLC33A transporter family. As to quaternary structure, homodimerizes. In terms of tissue distribution, ubiquitous. Detected in heart, brain, placenta, lung, liver, skeletal muscle, kidney and pancreas. With strongest signals in pancreas.

It localises to the endoplasmic reticulum membrane. It carries out the reaction acetyl-CoA(in) = acetyl-CoA(out). Acetyl-CoA transporter that mediates active acetyl-CoA import through the endoplasmic reticulum (ER) membrane into the ER lumen where specific ER-based acetyl-CoA:lysine acetyltransferases are responsible for the acetylation of ER-based protein substrates, such as BACE1. Necessary for O-acetylation of gangliosides. This is Acetyl-coenzyme A transporter 1 from Homo sapiens (Human).